A 429-amino-acid chain; its full sequence is UDP-N-acetylglucosamine 1-carboxyvinyltransferase (429 aa).

Residue 22-23 (KN) coordinates phosphoenolpyruvate. Position 102 (Arg102) interacts with UDP-N-acetyl-alpha-D-glucosamine. The active-site Proton donor is the Cys126. Residue Cys126 is modified to 2-(S-cysteinyl)pyruvic acid O-phosphothioketal. UDP-N-acetyl-alpha-D-glucosamine contacts are provided by residues 131-135 (RPVDL), Asp316, and Ile338.

It belongs to the EPSP synthase family. MurA subfamily.

The protein resides in the cytoplasm. It carries out the reaction phosphoenolpyruvate + UDP-N-acetyl-alpha-D-glucosamine = UDP-N-acetyl-3-O-(1-carboxyvinyl)-alpha-D-glucosamine + phosphate. It participates in cell wall biogenesis; peptidoglycan biosynthesis. Its function is as follows. Cell wall formation. Adds enolpyruvyl to UDP-N-acetylglucosamine. The chain is UDP-N-acetylglucosamine 1-carboxyvinyltransferase from Methylocella silvestris (strain DSM 15510 / CIP 108128 / LMG 27833 / NCIMB 13906 / BL2).